The chain runs to 427 residues: Acetylornithine aminotransferase (427 aa).

Residues 1 to 23 (MSLQTLIEQATNPPESGSAASSP) are disordered. Residues 124–125 (GA) and F157 contribute to the pyridoxal 5'-phosphate site. R160 contributes to the N(2)-acetyl-L-ornithine binding site. 248–251 (DEVQ) serves as a coordination point for pyridoxal 5'-phosphate. K277 carries the post-translational modification N6-(pyridoxal phosphate)lysine. Residue S304 participates in N(2)-acetyl-L-ornithine binding. Residue T305 coordinates pyridoxal 5'-phosphate.

Belongs to the class-III pyridoxal-phosphate-dependent aminotransferase family. ArgD subfamily. Homodimer. The cofactor is pyridoxal 5'-phosphate.

It is found in the cytoplasm. It catalyses the reaction N(2)-acetyl-L-ornithine + 2-oxoglutarate = N-acetyl-L-glutamate 5-semialdehyde + L-glutamate. It participates in amino-acid biosynthesis; L-arginine biosynthesis; N(2)-acetyl-L-ornithine from L-glutamate: step 4/4. This Nostoc sp. (strain PCC 7120 / SAG 25.82 / UTEX 2576) protein is Acetylornithine aminotransferase.